A 169-amino-acid polypeptide reads, in one-letter code: 6,7-dimethyl-8-ribityllumazine synthase (169 aa).

5-amino-6-(D-ribitylamino)uracil contacts are provided by residues Phe-24, 58–60 (ALE), and 82–84 (AVI). Residue 87–88 (ET) participates in (2S)-2-hydroxy-3-oxobutyl phosphate binding. His-90 functions as the Proton donor in the catalytic mechanism. Asn-115 serves as a coordination point for 5-amino-6-(D-ribitylamino)uracil. Arg-129 is a (2S)-2-hydroxy-3-oxobutyl phosphate binding site.

Belongs to the DMRL synthase family.

It catalyses the reaction (2S)-2-hydroxy-3-oxobutyl phosphate + 5-amino-6-(D-ribitylamino)uracil = 6,7-dimethyl-8-(1-D-ribityl)lumazine + phosphate + 2 H2O + H(+). It functions in the pathway cofactor biosynthesis; riboflavin biosynthesis; riboflavin from 2-hydroxy-3-oxobutyl phosphate and 5-amino-6-(D-ribitylamino)uracil: step 1/2. Its function is as follows. Catalyzes the formation of 6,7-dimethyl-8-ribityllumazine by condensation of 5-amino-6-(D-ribitylamino)uracil with 3,4-dihydroxy-2-butanone 4-phosphate. This is the penultimate step in the biosynthesis of riboflavin. This is 6,7-dimethyl-8-ribityllumazine synthase from Burkholderia vietnamiensis (strain G4 / LMG 22486) (Burkholderia cepacia (strain R1808)).